Consider the following 454-residue polypeptide: V-type ATP synthase subunit I 2 (454 aa).

A disordered region spans residues 101–121 (EREGDAPSVPRGKSSVAHDSA). 4 helical membrane passes run 254 to 274 (LLFG…VLGL), 293 to 313 (VFLS…EFFA), 351 to 371 (MAFF…GLII), and 424 to 444 (ACLS…SVCV).

It belongs to the V-ATPase 116 kDa subunit family.

The protein localises to the cell membrane. In terms of biological role, produces ATP from ADP in the presence of a proton gradient across the membrane. The protein is V-type ATP synthase subunit I 2 (atpI2) of Treponema pallidum (strain Nichols).